Consider the following 107-residue polypeptide: Prostate collagen triple helix protein (107 aa).

The interval 47–107 (PLIPRTPGSP…PTSPLFPFCP (61 aa)) is disordered. Residues 81–100 (VGPKGPMLPLGPSGPVGPTS) show a composition bias toward low complexity.

In terms of tissue distribution, expressed in prostate and testis. Weakly or not expressed in other tissues. Overexpressed in prostate cancers.

The protein resides in the cytoplasm. May be involved in growth and survival of prostate cancer cells through the TAF-Ibeta pathway. This chain is Prostate collagen triple helix protein (PCOTH), found in Homo sapiens (Human).